A 256-amino-acid polypeptide reads, in one-letter code: Trypsin alpha (256 aa).

Residues 1-22 (MLKIVILLSAVVCALGGTVPEG) form the signal peptide. A propeptide spans 23 to 30 (LLPQLDGR) (activation peptide). In terms of domain architecture, Peptidase S1 spans 31-254 (IVGGSATTIS…LRSWVISTAN (224 aa)). A disulfide bridge links C56 with C72. Catalysis depends on charge relay system residues H71 and D116. 2 disulfides stabilise this stretch: C180–C197 and C206–C230. S210 (charge relay system) is an active-site residue.

Belongs to the peptidase S1 family.

Its subcellular location is the secreted. The protein localises to the extracellular space. It catalyses the reaction Preferential cleavage: Arg-|-Xaa, Lys-|-Xaa.. The polypeptide is Trypsin alpha (alphaTry) (Drosophila erecta (Fruit fly)).